We begin with the raw amino-acid sequence, 81 residues long: Putative membrane protein insertion efficiency factor (81 aa).

The tract at residues 61-81 is disordered; sequence NDGGFDPVPPAPSSRTSSIAE.

It belongs to the UPF0161 family.

It is found in the cell inner membrane. Its function is as follows. Could be involved in insertion of integral membrane proteins into the membrane. This chain is Putative membrane protein insertion efficiency factor, found in Pseudomonas entomophila (strain L48).